Consider the following 198-residue polypeptide: Large ribosomal subunit protein bL25 (198 aa).

It belongs to the bacterial ribosomal protein bL25 family. CTC subfamily. Part of the 50S ribosomal subunit; part of the 5S rRNA/L5/L18/L25 subcomplex. Contacts the 5S rRNA. Binds to the 5S rRNA independently of L5 and L18.

Functionally, this is one of the proteins that binds to the 5S RNA in the ribosome where it forms part of the central protuberance. The polypeptide is Large ribosomal subunit protein bL25 (Chlorobium phaeobacteroides (strain DSM 266 / SMG 266 / 2430)).